We begin with the raw amino-acid sequence, 366 residues long: tRNA-specific 2-thiouridylase MnmA (366 aa).

Residues 12–19 (GMSGGVDS) and methionine 38 contribute to the ATP site. An interaction with target base in tRNA region spans residues 98–100 (NPD). Residue cysteine 103 is the Nucleophile of the active site. A disulfide bridge links cysteine 103 with cysteine 200. Glycine 128 provides a ligand contact to ATP. Residues 150-152 (KDQ) form an interaction with tRNA region. Residue cysteine 200 is the Cysteine persulfide intermediate of the active site. Positions 312-313 (RY) are interaction with tRNA.

It belongs to the MnmA/TRMU family.

Its subcellular location is the cytoplasm. It carries out the reaction S-sulfanyl-L-cysteinyl-[protein] + uridine(34) in tRNA + AH2 + ATP = 2-thiouridine(34) in tRNA + L-cysteinyl-[protein] + A + AMP + diphosphate + H(+). Functionally, catalyzes the 2-thiolation of uridine at the wobble position (U34) of tRNA, leading to the formation of s(2)U34. The chain is tRNA-specific 2-thiouridylase MnmA from Pseudoalteromonas translucida (strain TAC 125).